The sequence spans 391 residues: NADH-quinone oxidoreductase subunit D (391 aa).

It belongs to the complex I 49 kDa subunit family. In terms of assembly, NDH-1 is composed of 14 different subunits. Subunits NuoB, C, D, E, F, and G constitute the peripheral sector of the complex.

The protein resides in the cell inner membrane. The catalysed reaction is a quinone + NADH + 5 H(+)(in) = a quinol + NAD(+) + 4 H(+)(out). Its function is as follows. NDH-1 shuttles electrons from NADH, via FMN and iron-sulfur (Fe-S) centers, to quinones in the respiratory chain. The immediate electron acceptor for the enzyme in this species is believed to be ubiquinone. Couples the redox reaction to proton translocation (for every two electrons transferred, four hydrogen ions are translocated across the cytoplasmic membrane), and thus conserves the redox energy in a proton gradient. This is NADH-quinone oxidoreductase subunit D from Rickettsia canadensis (strain McKiel).